We begin with the raw amino-acid sequence, 568 residues long: Periplasmic trehalase (568 aa).

Positions 1 to 39 are cleaved as a signal peptide; the sequence is MPYATARSGDVMSSAAPPCCTSLLGLSLSMFVAPGTLTA. Substrate contacts are provided by residues Arg-169, 176–177, Asn-213, 222–224, 294–296, and Gly-327; these read WD, RSQ, and RPE. Residues Asp-329 and Glu-511 each act as proton donor/acceptor in the active site. Glu-526 serves as a coordination point for substrate.

It belongs to the glycosyl hydrolase 37 family.

It localises to the periplasm. It catalyses the reaction alpha,alpha-trehalose + H2O = alpha-D-glucose + beta-D-glucose. Functionally, provides the cells with the ability to utilize trehalose at high osmolarity by splitting it into glucose molecules that can subsequently be taken up by the phosphotransferase-mediated uptake system. This chain is Periplasmic trehalase, found in Xanthomonas axonopodis pv. citri (strain 306).